Consider the following 1513-residue polypeptide: Mucin-2 (1513 aa).

The N-terminal stretch at 1-20 (MGLPLARLVAVCLVLALAKG) is a signal peptide. In terms of domain architecture, VWFD 1 spans 32 to 204 (HVCSTWGDFH…KINKPEVVCE (173 aa)). Intrachain disulfides connect Cys-34–Cys-166, Cys-56–Cys-203, Cys-64–Cys-163, Cys-215–Cys-252, Cys-222–Cys-247, Cys-234–Cys-272, Cys-254–Cys-260, Cys-262–Cys-288, Cys-292–Cys-326, Cys-309–Cys-348, Cys-328–Cys-342, Cys-350–Cys-372, Cys-367–Cys-384, Cys-370–Cys-379, Cys-388–Cys-525, Cys-410–Cys-560, Cys-432–Cys-440, Cys-571–Cys-616, Cys-585–Cys-611, Cys-598–Cys-636, Cys-618–Cys-624, Cys-626–Cys-651, Cys-658–Cys-695, Cys-671–Cys-685, Cys-675–Cys-715, Cys-697–Cys-709, Cys-717–Cys-739, and Cys-737–Cys-746. Residue Asp-46 coordinates Ca(2+). Cu(+) contacts are provided by Met-143 and Met-151. A Cu(2+)-binding site is contributed by Glu-153. N-linked (GlcNAc...) asparagine glycosylation occurs at Asn-160. Residues Asp-168, Asn-170, and Glu-177 each coordinate Ca(2+). 2 residues coordinate Cu(2+): His-274 and His-321. One can recognise a TIL domain in the interval 292–348 (CPGNMVYLESGSPWLDTCSHLEVSSLCEEHYMDGCFCPEGTVYDDITGSGCIPVSQC). Met-323 contacts Cu(+). A VWFC domain is found at 350–410 (CKLHGHLYMP…GKKFTFHGDC (61 aa)). Positions 386-561 (ETCALEGGSH…NTWKAQSSCH (176 aa)) constitute a VWFD 2 domain. Asp-400 contributes to the Ca(2+) binding site. Asn-420 carries N-linked (GlcNAc...) asparagine glycosylation. Ca(2+)-binding residues include Asn-527, Asn-529, Leu-531, Asp-534, and Asp-535. Residue Asn-667 is glycosylated (N-linked (GlcNAc...) asparagine). An N-linked (GlcNAc...) asparagine glycan is attached at Asn-767. 21 cysteine pairs are disulfide-bonded: Cys-781/Cys-817, Cys-799/Cys-811, Cys-819/Cys-842, Cys-836/Cys-854, Cys-840/Cys-849, Cys-858/Cys-989, Cys-880/Cys-1024, Cys-889/Cys-986, Cys-906/Cys-913, Cys-1034/Cys-1077, Cys-1048/Cys-1072, Cys-1059/Cys-1099, Cys-1079/Cys-1087, Cys-1089/Cys-1114, Cys-1105/Cys-1134, Cys-1118/Cys-1160, Cys-1142/Cys-1184, Cys-1164/Cys-1178, Cys-1186/Cys-1210, Cys-1205/Cys-1235, and Cys-1208/Cys-1218. A glycan (N-linked (GlcNAc...) asparagine) is linked at Asn-837. In terms of domain architecture, VWFD 3 spans 856–1025 (STCSIYGSGH…NSWKEASTCP (170 aa)). Asp-870 contributes to the Ca(2+) binding site. The N-linked (GlcNAc...) asparagine glycan is linked to Asn-892. Ca(2+) contacts are provided by Asn-991, Asp-993, Asn-998, and Asp-999. 2 N-linked (GlcNAc...) asparagine glycosylation sites follow: Asn-1136 and Asn-1151. 3 N-linked (GlcNAc...) asparagine glycosylation sites follow: Asn-1212, Asn-1227, and Asn-1243. O-linked (GalNAc) threonine glycans are attached at residues Thr-1264, Thr-1267, Thr-1268, and Thr-1280. Ser-1286 carries O-linked (GalNAc) serine glycosylation. O-linked (GalNAc) threonine glycosylation is present at Thr-1290. Residues Asn-1303, His-1306, Ser-1309, Gly-1313, Asp-1314, and Glu-1316 each coordinate Ca(2+). A glycan (N-linked (GlcNAc...) asparagine) is linked at Asn-1350. 2 residues coordinate Ca(2+): Asp-1373 and Tyr-1374. Repeat copies occupy residues 1392 to 1407 (SPTT…QPTS), 1408 to 1423 (SPTT…SSAT), 1424 to 1434 (SPTTSHITSTV), 1435 to 1445 (SPTTSPTTSTT), 1446 to 1456 (SPTTSPTTSTT), 1457 to 1467 (SPTTSTTSPTP), 1468 to 1478 (SPTTSTTSPTP), 1479 to 1489 (SPTTSTTSPTP), 1490 to 1500 (SPTTSTTSPTT), 1501 to 1511 (SPITSPTTSTT), and 1512 to 1513 (SP). Residues 1392 to 1513 (SPTTSTPISS…TSPTTSTTSP (122 aa)) are approximate repeats. The disordered stretch occupies residues 1392–1513 (SPTTSTPISS…TSPTTSTTSP (122 aa)).

Homomultimer; disulfide-linked. The N- and C-terminus mediate their assembly into higher order structures to form filaments. The CTCK domains of two polypeptides associate in the endoplasmic reticulum to generate intermolecularly disulfide-bonded dimers. These dimers progress to the Golgi apparatus, which is a more acidic environment than the endoplasmic reticulum. Under acidic conditions, the N-termini form non-covalent intermolecular interactions that juxtapose assemblies of the third VWD domain (VWD3) from different CTCK-linked dimers. The VWD3 assemblies then become disulfide bonded to one another to produce long, disulfide-linked polymers that remain highly compact until secretion. Interacts with FCGBP. Interacts with AGR2; disulfide-linked. Post-translationally, O-glycosylated. O-glycosylation is required for mucin assembly. Goblet cells synthesize two forms of mucin that differ in branched chain O-glycosylation and the site of production in the colon. In terms of processing, may undergo proteolytic cleavage in the outer mucus layer of the colon, contributing to the expanded volume and loose nature of this layer which allows for bacterial colonization in contrast to the inner mucus layer which is dense and devoid of bacteria. At low pH of 6 and under, undergoes autocatalytic cleavage in vitro in the N-terminal region of the fourth VWD domain. It is likely that this also occurs in vivo and is triggered by the low pH of the late secretory pathway. Expressed in intestine and airway.

Its subcellular location is the secreted. In terms of biological role, coats the epithelia of the intestines and other mucus membrane-containing organs to provide a protective, lubricating barrier against particles and infectious agents at mucosal surfaces. Major constituent of the colon mucus, which is mainly formed by large polymeric networks of MUC2 secreted by goblet cells that cover the exposed surfaces of intestine. MUC2 networks form hydrogels that guard the underlying epithelium from pathogens and other hazardous matter entering from the outside world, while permitting nutrient absorption and gas exchange. Acts as a divalent copper chaperone that protects intestinal cells from copper toxicity and facilitates nutritional copper unptake into cells. Binds both Cu(2+) and its reduced form, Cu(1+), at two juxtaposed binding sites: Cu(2+), once reduced to Cu(1+) by vitamin C (ascorbate) or other dietary antioxidants, transits to the other binding site. MUC2-bound Cu(1+) is protected from oxidation in aerobic environments, and can be released for nutritional delivery to cells. Mucin gels store antimicrobial molecules that participate in innate immunity. Mucin glycoproteins also house and feed the microbiome, lubricate tissue surfaces, and may facilitate the removal of contaminants and waste products from the body. Goblet cells synthesize two forms of MUC2 mucin that differ in branched chain O-glycosylation and the site of production in the colon: a (1) 'thick' mucus that wraps the microbiota to form fecal pellets is produced in the proximal, ascending colon. 'Thick' mucus transits along the descending colon and is lubricated by a (2) 'thin' MUC2 mucus produced in the distal colon which adheres to the 'thick' mucus. The chain is Mucin-2 from Rattus norvegicus (Rat).